Consider the following 96-residue polypeptide: RNA-binding protein Hfq (96 aa).

The region spanning 9-68 (DPYLNALRRERIPVSIYLVNGIKLQGQIESFDQFVILLKNTVNQMVYKHAISTVVPARSV) is the Sm domain.

The protein belongs to the Hfq family. In terms of assembly, homohexamer.

RNA chaperone that binds small regulatory RNA (sRNAs) and mRNAs to facilitate mRNA translational regulation in response to envelope stress, environmental stress and changes in metabolite concentrations. Also binds with high specificity to tRNAs. In Histophilus somni (strain 129Pt) (Haemophilus somnus), this protein is RNA-binding protein Hfq.